We begin with the raw amino-acid sequence, 451 residues long: Uronate isomerase (451 aa).

It belongs to the metallo-dependent hydrolases superfamily. Uronate isomerase family.

It catalyses the reaction D-glucuronate = D-fructuronate. The enzyme catalyses aldehydo-D-galacturonate = keto-D-tagaturonate. Its pathway is carbohydrate metabolism; pentose and glucuronate interconversion. In Thermotoga sp. (strain RQ2), this protein is Uronate isomerase.